A 355-amino-acid polypeptide reads, in one-letter code: Mu-like prophage FluMu I protein (355 aa).

Belongs to the peptidase U35 family.

Its function is as follows. Potential protease involved in virion morphogenesis. In Haemophilus influenzae (strain ATCC 51907 / DSM 11121 / KW20 / Rd), this protein is Mu-like prophage FluMu I protein.